Reading from the N-terminus, the 503-residue chain is Putative aldehyde dehydrogenase-like protein C9E9.09c (503 aa).

Residue 247–252 (GSTGVG) coordinates NAD(+). Ser-248 carries the phosphoserine modification. Residue Glu-270 is the Proton acceptor of the active site. Catalysis depends on Cys-304, which acts as the Nucleophile. Ser-501 bears the Phosphoserine mark.

Belongs to the aldehyde dehydrogenase family.

The polypeptide is Putative aldehyde dehydrogenase-like protein C9E9.09c (Schizosaccharomyces pombe (strain 972 / ATCC 24843) (Fission yeast)).